Reading from the N-terminus, the 325-residue chain is Elongation factor P--(R)-beta-lysine ligase (325 aa).

Position 76–78 (76–78) interacts with substrate; that stretch reads SPE. ATP-binding positions include 100–102 and Asn-109; that span reads RNE. Tyr-118 provides a ligand contact to substrate. 244 to 245 is an ATP binding site; sequence EL. Glu-251 is a substrate binding site. Residue Gly-300 coordinates ATP.

The protein belongs to the class-II aminoacyl-tRNA synthetase family. EpmA subfamily. As to quaternary structure, homodimer.

The catalysed reaction is D-beta-lysine + L-lysyl-[protein] + ATP = N(6)-((3R)-3,6-diaminohexanoyl)-L-lysyl-[protein] + AMP + diphosphate + H(+). With EpmB is involved in the beta-lysylation step of the post-translational modification of translation elongation factor P (EF-P). Catalyzes the ATP-dependent activation of (R)-beta-lysine produced by EpmB, forming a lysyl-adenylate, from which the beta-lysyl moiety is then transferred to the epsilon-amino group of a conserved specific lysine residue in EF-P. The protein is Elongation factor P--(R)-beta-lysine ligase of Edwardsiella ictaluri (strain 93-146).